The following is a 260-amino-acid chain: ATP synthase subunit a (260 aa).

Transmembrane regions (helical) follow at residues Phe-37–Leu-57, Phe-95–Phe-115, Ile-125–Val-145, Val-154–Ile-174, Met-191–Met-211, and Glu-233–His-253.

It belongs to the ATPase A chain family. As to quaternary structure, F-type ATPases have 2 components, CF(1) - the catalytic core - and CF(0) - the membrane proton channel. CF(1) has five subunits: alpha(3), beta(3), gamma(1), delta(1), epsilon(1). CF(0) has three main subunits: a(1), b(2) and c(9-12). The alpha and beta chains form an alternating ring which encloses part of the gamma chain. CF(1) is attached to CF(0) by a central stalk formed by the gamma and epsilon chains, while a peripheral stalk is formed by the delta and b chains.

The protein resides in the cell inner membrane. Key component of the proton channel; it plays a direct role in the translocation of protons across the membrane. The protein is ATP synthase subunit a of Parvibaculum lavamentivorans (strain DS-1 / DSM 13023 / NCIMB 13966).